Consider the following 622-residue polypeptide: WD repeat-containing protein 70 (622 aa).

Basic and acidic residues predominate over residues 37–55; that stretch reads TAVERSKKTLEAREKEEQI. The disordered stretch occupies residues 37-141; that stretch reads TAVERSKKTL…DNPVKGIPDS (105 aa). Over residues 67–84 the composition is skewed to low complexity; that stretch reads SSSRQKNTDTSSSSSGSE. The segment covering 120 to 132 has biased composition (acidic residues); that stretch reads SDDEDEEQHEDDD. WD repeat units follow at residues 148–187, 195–236, 249–289, 298–337, 344–383, 389–434, and 437–476; these read HGTK…ASLQ, CECH…ECVK, GHTA…KHKG, GKRV…HTKF, TPGT…NPLN, ANYF…KVYE, and VTEA…QRGA. Basic and acidic residues predominate over residues 508 to 533; sequence REPRQRSTRKQLEKDRLDPVKSHKPE. Disordered regions lie at residues 508–549 and 602–622; these read REPR…GTHG and AEVE…KRKI. The span at 539 to 549 shows a compositional bias: gly residues; sequence PGRGGRVGTHG. Residues 604–614 show a composition bias toward acidic residues; it reads VESDEEETDNE.

This sequence belongs to the WD repeat GAD-1 family.

The polypeptide is WD repeat-containing protein 70 (wdr70) (Xenopus tropicalis (Western clawed frog)).